A 64-amino-acid polypeptide reads, in one-letter code: Large ribosomal subunit protein bL35 (64 aa).

Positions 1–14 (MKNKTHKGTAKRVK) are enriched in basic residues. The segment at 1–29 (MKNKTHKGTAKRVKVTGSGKLVREQANRR) is disordered.

The protein belongs to the bacterial ribosomal protein bL35 family.

This chain is Large ribosomal subunit protein bL35, found in Corynebacterium glutamicum (strain R).